The sequence spans 208 residues: Mediator of RNA polymerase II transcription subunit 18 (208 aa).

S66 carries the phosphoserine modification.

Belongs to the Mediator complex subunit 18 family. In terms of assembly, component of the Mediator complex, which is composed of MED1, MED4, MED6, MED7, MED8, MED9, MED10, MED11, MED12, MED13, MED13L, MED14, MED15, MED16, MED17, MED18, MED19, MED20, MED21, MED22, MED23, MED24, MED25, MED26, MED27, MED29, MED30, MED31, CCNC, CDK8 and CDC2L6/CDK11. The MED12, MED13, CCNC and CDK8 subunits form a distinct module termed the CDK8 module. Mediator containing the CDK8 module is less active than Mediator lacking this module in supporting transcriptional activation. Individual preparations of the Mediator complex lacking one or more distinct subunits have been variously termed ARC, CRSP, DRIP, PC2, SMCC and TRAP.

The protein resides in the nucleus. Its function is as follows. Component of the Mediator complex, a coactivator involved in the regulated transcription of nearly all RNA polymerase II-dependent genes. Mediator functions as a bridge to convey information from gene-specific regulatory proteins to the basal RNA polymerase II transcription machinery. Mediator is recruited to promoters by direct interactions with regulatory proteins and serves as a scaffold for the assembly of a functional preinitiation complex with RNA polymerase II and the general transcription factors. The protein is Mediator of RNA polymerase II transcription subunit 18 (MED18) of Homo sapiens (Human).